Consider the following 402-residue polypeptide: Putative F-box protein At1g70970 (402 aa).

The region spanning 4–52 (SSSETLHVEDLQTEIMSWLPLKSLLRFVIVSKKWASIIRGEQFKALYLR) is the F-box domain.

The chain is Putative F-box protein At1g70970 from Arabidopsis thaliana (Mouse-ear cress).